We begin with the raw amino-acid sequence, 353 residues long: D-alanine--D-alanine ligase A (353 aa).

Positions 141-346 (KRLVNEAGLS…YPEIINRLVA (206 aa)) constitute an ATP-grasp domain. Residue 169–224 (EQALGLPIFIKPARQGSSVGVHKVVTEADYQAAMSDGFTYDDKLLAEEFIQAREVE) participates in ATP binding. 3 residues coordinate Mg(2+): aspartate 300, glutamate 313, and asparagine 315.

Belongs to the D-alanine--D-alanine ligase family. The cofactor is Mg(2+). Mn(2+) is required as a cofactor.

It localises to the cytoplasm. It carries out the reaction 2 D-alanine + ATP = D-alanyl-D-alanine + ADP + phosphate + H(+). Its pathway is cell wall biogenesis; peptidoglycan biosynthesis. Cell wall formation. This Brucella suis biovar 1 (strain 1330) protein is D-alanine--D-alanine ligase A.